Reading from the N-terminus, the 713-residue chain is Mitochondrial intermediate peptidase (713 aa).

Residues 1-35 (MLCVGRLGGLGARAAALPPRRAGRGSLEAGIRARR) constitute a mitochondrion transit peptide. Lys-126 carries the N6-acetyllysine modification. Residue His-495 participates in Zn(2+) binding. The active site involves Glu-496. Zn(2+) contacts are provided by His-499 and His-502.

This sequence belongs to the peptidase M3 family. Monomer. Requires Zn(2+) as cofactor.

It is found in the mitochondrion matrix. The enzyme catalyses Release of an N-terminal octapeptide as second stage of processing of some proteins imported into the mitochondrion.. With respect to regulation, activity is divalent cation-dependent. It is stimulated by manganese, magnesium or calcium ions and reversibly inhibited by zinc, cobalt and iron. Its function is as follows. Cleaves proteins, imported into the mitochondrion, to their mature size. The chain is Mitochondrial intermediate peptidase (MIPEP) from Homo sapiens (Human).